A 182-amino-acid chain; its full sequence is Large ribosomal subunit protein uL6 (182 aa).

The protein belongs to the universal ribosomal protein uL6 family. In terms of assembly, part of the 50S ribosomal subunit.

This protein binds to the 23S rRNA, and is important in its secondary structure. It is located near the subunit interface in the base of the L7/L12 stalk, and near the tRNA binding site of the peptidyltransferase center. The chain is Large ribosomal subunit protein uL6 from Haloquadratum walsbyi (strain DSM 16790 / HBSQ001).